The chain runs to 505 residues: MAATTAAVVAEEDTELRDLLVQTLENSGVLNRIKAELRAAVFLALEEQEKVEVKILVEFLIDNCFEIFGENIRTRSRITSDDSLEHTDSSDVSTLQNDSAYDSNDPDVEPTSGAASPNRQLEGPTPTMAGLDTRGHRDTCESSSESSVSMVVRLKNSIVQQDRRFSEPNMSPSRECLVGPTSKQKLTRSEDSFTLSQDASCSEGDEAEDPFTEEVFPAVDSKPKRPVDLKIKNWTQGLASPQGHITKAFSRSSPGESLGSSPVPSPSCPKRNFFTRHQSFTTKTDKTKPQREIRKHSMLFSFASHKKVLPRTSSIGSEKSKDFSRDQLQKDLRKESQLSGRIVQENESEIQSQTSLGFSLSGTWALSVDNTFQLVDMRKPGSPPSYEEAIYYQTSGLTAYGGQTVGSMRSRMFKPSTAVPPVPSHHGGDLSEGTPGGHRLSSVTEHWTHSQTVHVSIETQGRSELHQLRTVSESMQKAKLDCLGPQHSHLVFEADQLCCARESYI.

Disordered regions lie at residues 81-147, 160-212, 242-293, 311-339, and 414-441; these read DDSL…SESS, QQDR…DPFT, QGHI…QREI, RTSSIGSEKSKDFSRDQLQKDLRKESQLS, and KPSTAVPPVPSHHGGDLSEGTPGGHRLS. Residues 90-102 are compositionally biased toward polar residues; it reads SDVSTLQNDSAYD. Positions 203–212 are enriched in acidic residues; sequence EGDEAEDPFT. The segment covering 250 to 262 has biased composition (low complexity); it reads SRSSPGESLGSSP. Basic and acidic residues-rich tracts occupy residues 283-292 and 318-336; these read KTDKTKPQRE and EKSKDFSRDQLQKDLRKES.

This chain is T-cell activation GTPase-activating protein 1 (Tagap1), found in Mus musculus (Mouse).